Consider the following 360-residue polypeptide: Phospho-N-acetylmuramoyl-pentapeptide-transferase (360 aa).

The next 10 helical transmembrane spans lie at 27-47 (GALI…INSL), 71-91 (TPTM…LLWA), 93-113 (LSSI…SIGF), 134-154 (LGLE…NGQA), 168-188 (FIIN…VGAG), 199-219 (GLAI…AYLS), 239-259 (LAVV…FNAP), 262-282 (AIFM…TVAV), 288-308 (IVLV…IIQV), and 337-357 (QVVI…LSTL).

Belongs to the glycosyltransferase 4 family. MraY subfamily. Requires Mg(2+) as cofactor.

It is found in the cell inner membrane. It catalyses the reaction UDP-N-acetyl-alpha-D-muramoyl-L-alanyl-gamma-D-glutamyl-meso-2,6-diaminopimeloyl-D-alanyl-D-alanine + di-trans,octa-cis-undecaprenyl phosphate = di-trans,octa-cis-undecaprenyl diphospho-N-acetyl-alpha-D-muramoyl-L-alanyl-D-glutamyl-meso-2,6-diaminopimeloyl-D-alanyl-D-alanine + UMP. It participates in cell wall biogenesis; peptidoglycan biosynthesis. Catalyzes the initial step of the lipid cycle reactions in the biosynthesis of the cell wall peptidoglycan: transfers peptidoglycan precursor phospho-MurNAc-pentapeptide from UDP-MurNAc-pentapeptide onto the lipid carrier undecaprenyl phosphate, yielding undecaprenyl-pyrophosphoryl-MurNAc-pentapeptide, known as lipid I. In Mesorhizobium japonicum (strain LMG 29417 / CECT 9101 / MAFF 303099) (Mesorhizobium loti (strain MAFF 303099)), this protein is Phospho-N-acetylmuramoyl-pentapeptide-transferase.